Here is a 100-residue protein sequence, read N- to C-terminus: MQLTPREVEKLMIYTLSDVAFKRKARGLKLNYPEAVSIITVTAMEGARDGKSVEDVMKEASKVLTKDDVMDGVADLIPNVQVEAIFTDGSRLVTVHDPIK.

It belongs to the urease gamma subunit family. Heterotrimer of UreA (gamma), UreB (beta) and UreC (alpha) subunits. Three heterotrimers associate to form the active enzyme.

It localises to the cytoplasm. It catalyses the reaction urea + 2 H2O + H(+) = hydrogencarbonate + 2 NH4(+). The protein operates within nitrogen metabolism; urea degradation; CO(2) and NH(3) from urea (urease route): step 1/1. This Yersinia bercovieri protein is Urease subunit gamma.